Here is a 214-residue protein sequence, read N- to C-terminus: Orotate phosphoribosyltransferase (214 aa).

Lysine 26 contributes to the 5-phospho-alpha-D-ribose 1-diphosphate binding site. Position 34 to 35 (34 to 35 (FF)) interacts with orotate. Residues 72-73 (YK), arginine 99, lysine 100, lysine 103, histidine 105, and 124-132 (DDVITAGTA) each bind 5-phospho-alpha-D-ribose 1-diphosphate. Residues threonine 128 and arginine 157 each coordinate orotate.

This sequence belongs to the purine/pyrimidine phosphoribosyltransferase family. PyrE subfamily. In terms of assembly, homodimer. Mg(2+) serves as cofactor.

It carries out the reaction orotidine 5'-phosphate + diphosphate = orotate + 5-phospho-alpha-D-ribose 1-diphosphate. The protein operates within pyrimidine metabolism; UMP biosynthesis via de novo pathway; UMP from orotate: step 1/2. In terms of biological role, catalyzes the transfer of a ribosyl phosphate group from 5-phosphoribose 1-diphosphate to orotate, leading to the formation of orotidine monophosphate (OMP). In Pseudomonas fluorescens (strain ATCC BAA-477 / NRRL B-23932 / Pf-5), this protein is Orotate phosphoribosyltransferase.